A 125-amino-acid chain; its full sequence is Prefoldin subunit beta (125 aa).

The protein belongs to the prefoldin subunit beta family. Heterohexamer of two alpha and four beta subunits.

The protein resides in the cytoplasm. Functionally, molecular chaperone capable of stabilizing a range of proteins. Seems to fulfill an ATP-independent, HSP70-like function in archaeal de novo protein folding. This chain is Prefoldin subunit beta, found in Pyrobaculum islandicum (strain DSM 4184 / JCM 9189 / GEO3).